A 377-amino-acid polypeptide reads, in one-letter code: Probable glucokinase 2 (377 aa).

27–32 (CDVGGS) provides a ligand contact to ATP.

Belongs to the bacterial glucokinase family.

The catalysed reaction is D-glucose + ATP = D-glucose 6-phosphate + ADP + H(+). This Trichomonas vaginalis protein is Probable glucokinase 2 (GK2).